A 189-amino-acid chain; its full sequence is Protein Rex (189 aa).

Residues M1 to P16 show a composition bias toward basic residues. Positions M1–L26 are disordered. Positions P2–T18 match the Nuclear localization signal, and RNA-binding (RxRE) motif. The segment at R56–S70 is homomultimerization. S70 is modified (phosphoserine; by host). The Nuclear export signal signature appears at L82–G93. The disordered stretch occupies residues Y87–R189. A compositionally biased stretch (pro residues) spans I115–S125. The tract at residues P123–T131 is homomultimerization. T174 is modified (phosphothreonine; by host). S177 bears the Phosphoserine; by host mark. Pro residues predominate over residues F178–R189.

The protein belongs to the deltaretrovirus Rex protein family. As to quaternary structure, homomultimer. Multimeric assembly is essential for activity and involves XPO1. Binds to human XPO1 and KPNB1. Interacts (via N-terminal nuclear localization signal) with human NPM1. Post-translationally, phosphorylated.

Its subcellular location is the host nucleus. The protein resides in the host nucleolus. The protein localises to the host cytoplasm. Its function is as follows. Rex escorts unspliced gag-pro-pol and singly spliced env mRNAs out of the nucleus of infected cells. These mRNAs carry a recognition sequence called Rex responsive element (RxRE or XRE) located at the 3' region of the long terminal repeat (LTR). This function is essential since most HTLV proteins are translated from unspliced or partially spliced pre-mRNAs that cannot exit the nucleus by the pathway used by fully processed cellular mRNAs. Rex itself is translated from a fully spliced mRNA that probably readily exits the nucleus. Rex's nuclear localization signal (NLS) binds directly to KPNB1/importin beta-1 without previous binding to KPNA1/importin alpha-1. KPNB1 binds to the GDP bound form of RAN (Ran-GDP) and targets Rex to the nucleus. In the nucleus, the conversion from Ran-GDP to Ran-GTP dissociates Rex from KPNB1 and allows Rex's binding to the RRE in viral pre-mRNAs. Rex multimerizes on the RRE via cooperative assembly. This multimerization is critical for its full biological activity, since it may shield the viral RNA from being spliced or down-regulated, and probably exposes Rex's nuclear export signal (NES) to the surface. Rex can then form a complex with XPO1/CRM1, RANBP3 and Ran-GTP, leading to nuclear export of the complex. Conversion from Ran-GTP to Ran-GDP mediates dissociation of the Rex/RRE/XPO1/RANBP3/RAN complex, so that Rex can return to the nucleus for a subsequent round of export. This is Protein Rex from Homo sapiens (Human).